The sequence spans 317 residues: Aspartate carbamoyltransferase catalytic subunit (317 aa).

Carbamoyl phosphate contacts are provided by R66 and T67. K94 is an L-aspartate binding site. Carbamoyl phosphate is bound by residues R116, H144, and Q147. L-aspartate contacts are provided by R177 and R231. 2 residues coordinate carbamoyl phosphate: G272 and P273.

It belongs to the aspartate/ornithine carbamoyltransferase superfamily. ATCase family. In terms of assembly, heterododecamer (2C3:3R2) of six catalytic PyrB chains organized as two trimers (C3), and six regulatory PyrI chains organized as three dimers (R2).

The enzyme catalyses carbamoyl phosphate + L-aspartate = N-carbamoyl-L-aspartate + phosphate + H(+). The protein operates within pyrimidine metabolism; UMP biosynthesis via de novo pathway; (S)-dihydroorotate from bicarbonate: step 2/3. Catalyzes the condensation of carbamoyl phosphate and aspartate to form carbamoyl aspartate and inorganic phosphate, the committed step in the de novo pyrimidine nucleotide biosynthesis pathway. The polypeptide is Aspartate carbamoyltransferase catalytic subunit (Nitrobacter winogradskyi (strain ATCC 25391 / DSM 10237 / CIP 104748 / NCIMB 11846 / Nb-255)).